The chain runs to 222 residues: UPF0758 protein Ppha_0935 (222 aa).

The 123-residue stretch at 100-222 folds into the MPN domain; the sequence is KIQAARDVFE…CFSFRESGLL (123 aa). Residues H171, H173, and D184 each contribute to the Zn(2+) site. Positions 171–184 match the JAMM motif motif; the sequence is HNHPSGDVEPSNAD.

It belongs to the UPF0758 family.

This chain is UPF0758 protein Ppha_0935, found in Pelodictyon phaeoclathratiforme (strain DSM 5477 / BU-1).